The sequence spans 273 residues: Octanoyltransferase LipM (273 aa).

Residues 32–240 form the BPL/LPL catalytic domain; sequence GEIPPTLRFY…GFSEILNIEL (209 aa). C142 acts as the Acyl-thioester intermediate in catalysis.

Belongs to the octanoyltransferase LipM family. As to quaternary structure, monomer.

The enzyme catalyses octanoyl-[ACP] + L-lysyl-[protein] = N(6)-octanoyl-L-lysyl-[protein] + holo-[ACP] + H(+). It functions in the pathway protein modification; protein lipoylation via endogenous pathway; protein N(6)-(lipoyl)lysine from octanoyl-[acyl-carrier-protein]. Catalyzes the transfer of endogenously produced octanoic acid from octanoyl-acyl-carrier-protein onto the lipoyl domain of GcvH, an intermediate carrier during protein lipoylation. The polypeptide is Octanoyltransferase LipM (Oceanobacillus iheyensis (strain DSM 14371 / CIP 107618 / JCM 11309 / KCTC 3954 / HTE831)).